The sequence spans 107 residues: Ferredoxin 1 (107 aa).

4Fe-4S ferredoxin-type domains lie at 2 to 30 (TFVV…YEGP) and 31 to 60 (NFLV…SEDE). 2 residues coordinate [3Fe-4S] cluster: Cys9 and Cys17. [4Fe-4S] cluster is bound by residues Cys21, Cys40, Cys43, and Cys46. Cys50 lines the [3Fe-4S] cluster pocket.

[4Fe-4S] cluster is required as a cofactor. It depends on [3Fe-4S] cluster as a cofactor.

Functionally, ferredoxins are iron-sulfur proteins that transfer electrons in a wide variety of metabolic reactions. The polypeptide is Ferredoxin 1 (fdxA) (Pseudomonas putida (strain ATCC 47054 / DSM 6125 / CFBP 8728 / NCIMB 11950 / KT2440)).